Reading from the N-terminus, the 377-residue chain is Succinyl-diaminopimelate desuccinylase (377 aa).

Zn(2+) is bound at residue H66. D68 is a catalytic residue. Residue D99 participates in Zn(2+) binding. E133 serves as the catalytic Proton acceptor. The Zn(2+) site is built by E134, E163, and H349.

Belongs to the peptidase M20A family. DapE subfamily. In terms of assembly, homodimer. It depends on Zn(2+) as a cofactor. Co(2+) serves as cofactor.

It carries out the reaction N-succinyl-(2S,6S)-2,6-diaminopimelate + H2O = (2S,6S)-2,6-diaminopimelate + succinate. The protein operates within amino-acid biosynthesis; L-lysine biosynthesis via DAP pathway; LL-2,6-diaminopimelate from (S)-tetrahydrodipicolinate (succinylase route): step 3/3. Its function is as follows. Catalyzes the hydrolysis of N-succinyl-L,L-diaminopimelic acid (SDAP), forming succinate and LL-2,6-diaminopimelate (DAP), an intermediate involved in the bacterial biosynthesis of lysine and meso-diaminopimelic acid, an essential component of bacterial cell walls. The protein is Succinyl-diaminopimelate desuccinylase of Legionella pneumophila (strain Corby).